The primary structure comprises 220 residues: Cell division protein SepF (220 aa).

The interval 33 to 82 (GAARGYARRPREDRFEEEGYIDRAGREYDDRPAPREYDEPPIYRGGYDEP) is disordered. Over residues 52-70 (YIDRAGREYDDRPAPREYD) the composition is skewed to basic and acidic residues.

It belongs to the SepF family. In terms of assembly, homodimer. Interacts with FtsZ.

It is found in the cytoplasm. Cell division protein that is part of the divisome complex and is recruited early to the Z-ring. Probably stimulates Z-ring formation, perhaps through the cross-linking of FtsZ protofilaments. Its function overlaps with FtsA. This is Cell division protein SepF from Mycobacterium sp. (strain JLS).